The chain runs to 639 residues: Uridine permease (639 aa).

The segment at 1 to 37 (MPVSDSGFDNSSKTMKDDTIPTEDYEEITKESEMGDA) is disordered. Residues 1–162 (MPVSDSGFDN…LQLGLNWWQT (162 aa)) lie on the Cytoplasmic side of the membrane. Thr-54 carries the post-translational modification Phosphothreonine. At Ser-56 the chain carries Phosphoserine. Residues 163–180 (WICIWVGYTFVAFFLILG) traverse the membrane as a helical segment. At 181 to 200 (SKVGNNYHISFPISSRVSFG) the chain is on the extracellular side. The helical transmembrane segment at 201-225 (IYFSIWIVINRVVMACVWNSTLAYI) threads the bilayer. Topologically, residues 226–259 (GSQCVQLMLKAIFGTNLNTRIKDTIKNPNLTNFE) are cytoplasmic. A helical transmembrane segment spans residues 260–276 (FMCFMVFWVACLPFLWF). Topologically, residues 277-283 (PPDKLRH) are extracellular. The chain crosses the membrane as a helical span at residues 284-305 (IFALKSAITPFAAFGFLIWTLC). At 306 to 367 (KAKGHLALGS…KTYKSSVYSQ (62 aa)) the chain is on the cytoplasmic side. The chain crosses the membrane as a helical span at residues 368–392 (LIALPVCYAIISLIGILSVSAAYTL). Residues 393 to 416 (YGVNYWSPLDILNRYLDNYTSGNR) lie on the Extracellular side of the membrane. Residues 417 to 435 (AGVFLISFIFAFDQLGANL) traverse the membrane as a helical segment. Over 436-460 (SGNSIPAGTDLTALLPKFINIRRGS) the chain is Cytoplasmic. A helical transmembrane segment spans residues 461-477 (YICALISLAICPWDLLS). The Extracellular portion of the chain corresponds to 478–483 (SSSKFT). A helical membrane pass occupies residues 484–507 (TALAAYAVFLSAIAGVISADYFIV). Topologically, residues 508–537 (RKGYVNIFHCYTDKPGSYYMYNKYGTNWRA) are cytoplasmic. The helical transmembrane segment at 538 to 562 (VVAYIFGIAPNFAGFLGSVGVSVPI) threads the bilayer. Topologically, residues 563 to 572 (GAMKVYYLNY) are extracellular. Residues 573–590 (FVGYLLAALSYCILVYFY) traverse the membrane as a helical segment. At 591 to 639 (PIKGIPGDAKITDRKWLEEWVEVEEFGTEREAFEEYGGVSTGYEKIRYI) the chain is on the cytoplasmic side. A Glycyl lysine isopeptide (Lys-Gly) (interchain with G-Cter in ubiquitin) cross-link involves residue Lys-635.

It belongs to the purine-cytosine permease (2.A.39) family.

Its subcellular location is the membrane. Its function is as follows. High-affinity transport of uridine. The protein is Uridine permease (FUI1) of Saccharomyces cerevisiae (strain ATCC 204508 / S288c) (Baker's yeast).